We begin with the raw amino-acid sequence, 440 residues long: uncharacterized protein (440 aa).

The signal sequence occupies residues 1–19; it reads MKKLLLAASIIYFASVSLA.

This is an uncharacterized protein from Rickettsia typhi (strain ATCC VR-144 / Wilmington).